The following is a 425-amino-acid chain: MKLQKPKGTQDILPGEAAKWQYLENVARETFKKYHYGEIRTPMFEHYEVISRSVGDTTDIVTKEMYDFHDKGDRHITLRPEGTAPVVRSFVENKLFAPEVQKPVKLYYIGSMFRYERPQAGRLREFHQIGVECFGSANPASDVETIAMASHLFETLGIKDMTLHLNSLGNPSSRAAYRQALIDYLTPMREQLSKDSQRRLDENPLRVLDSKEVEDKVAVENAPSILDYLDEESKAHFEAVQEMLTTLNIPFVIDTNMVRGLDYYNHTIFEFMAKVEGSDLTICAGGRYDGLVSYFDGPETPGFGFGLGLERLLLILEKQGITLPIEEPMDVYLAVLGEAANSKALALVQAIRKQGFTAERDYLGRKIKAQFKSADSFNAKTIITLGESEVETGKVIIKNNQTREEMEVSLEEITSNFATIMEKLV.

The protein belongs to the class-II aminoacyl-tRNA synthetase family. In terms of assembly, homodimer.

The protein localises to the cytoplasm. The catalysed reaction is tRNA(His) + L-histidine + ATP = L-histidyl-tRNA(His) + AMP + diphosphate + H(+). The sequence is that of Histidine--tRNA ligase from Streptococcus uberis (strain ATCC BAA-854 / 0140J).